A 426-amino-acid polypeptide reads, in one-letter code: Enolase (426 aa).

Q163 contributes to the (2R)-2-phosphoglycerate binding site. E205 functions as the Proton donor in the catalytic mechanism. 3 residues coordinate Mg(2+): D242, E283, and D310. K335, R364, S365, and K386 together coordinate (2R)-2-phosphoglycerate. K335 serves as the catalytic Proton acceptor.

It belongs to the enolase family. Requires Mg(2+) as cofactor.

It is found in the cytoplasm. The protein localises to the secreted. It localises to the cell surface. It catalyses the reaction (2R)-2-phosphoglycerate = phosphoenolpyruvate + H2O. Its pathway is carbohydrate degradation; glycolysis; pyruvate from D-glyceraldehyde 3-phosphate: step 4/5. Functionally, catalyzes the reversible conversion of 2-phosphoglycerate (2-PG) into phosphoenolpyruvate (PEP). It is essential for the degradation of carbohydrates via glycolysis. The chain is Enolase from Arthrobacter sp. (strain FB24).